Reading from the N-terminus, the 373-residue chain is Leucine aminopeptidase 1 (373 aa).

An N-terminal signal peptide occupies residues 1 to 18 (MKFISVLALGATATSVLG). The Zn(2+) site is built by histidine 176 and aspartate 195. Residue asparagine 196 is glycosylated (N-linked (GlcNAc...) asparagine). Zn(2+) is bound by residues glutamate 234 and aspartate 261. Asparagine 286 is a glycosylation site (N-linked (GlcNAc...) asparagine). Cysteine 310 and cysteine 314 form a disulfide bridge. Zn(2+) is bound at residue histidine 343.

The protein belongs to the peptidase M28 family. M28E subfamily. Monomer. Requires Zn(2+) as cofactor.

Its subcellular location is the secreted. In terms of biological role, extracellular aminopeptidase which contributes to pathogenicity. The polypeptide is Leucine aminopeptidase 1 (LAP1) (Arthroderma otae (strain ATCC MYA-4605 / CBS 113480) (Microsporum canis)).